We begin with the raw amino-acid sequence, 1730 residues long: Meiosis regulator and mRNA stability factor 1 (1730 aa).

Ser-65 is subject to Phosphoserine. In terms of domain architecture, NYN spans 352-489; sequence IGVFWDIENC…ALLHHANQLI (138 aa). Basic and acidic residues predominate over residues 655 to 668; that stretch reads MESKSGNRNSDHQQ. The tract at residues 655 to 722 is disordered; sequence MESKSGNRNS…VNSPVEKKKR (68 aa). Tyr-698 bears the Phosphotyrosine mark. The RRM domain maps to 781-860; the sequence is VDIQVSNVDY…KKILVSLSTG (80 aa). HTH OST-type domains follow at residues 865-939 and 993-1069; these read SLSL…SPLG and SLKV…HNKP. A phosphoserine mark is found at Ser-1081 and Ser-1083. HTH OST-type domains are found at residues 1089–1163, 1165–1241, 1249–1324, 1325–1400, 1401–1475, and 1476–1550; these read QLIQ…LTHR, QVKR…RKRE, RTKQ…TEVE, RFKA…INRK, SLRS…VKLT, and SLYL…LKND. Positions 1667–1714 are disordered; the sequence is VQKGNLSCDSSPSSPAASPAPPGPSSEAPRPLFSKDAVESPAKKQPKN. Residue Ser-1684 is modified to Phosphoserine.

Interacts with LIMK2. As to expression, predominantly present in oocytes and barely detectable in granulosa cells (at protein level).

Its subcellular location is the peroxisome. Essential regulator of oogenesis required for female meiotic progression to repress transposable elements and preventing their mobilization, which is essential for the germline integrity. Probably acts via some RNA metabolic process, equivalent to the piRNA system in males, which mediates the repression of transposable elements during meiosis by forming complexes composed of RNAs and governs the methylation and subsequent repression of transposons. Also required to protect from DNA double-strand breaks. The polypeptide is Meiosis regulator and mRNA stability factor 1 (Marf1) (Mus musculus (Mouse)).